A 206-amino-acid polypeptide reads, in one-letter code: UPF0502 protein Acid_1185 (206 aa).

The protein belongs to the UPF0502 family.

In Solibacter usitatus (strain Ellin6076), this protein is UPF0502 protein Acid_1185.